A 135-amino-acid chain; its full sequence is Small ribosomal subunit protein uS12 (135 aa).

3-methylthioaspartic acid is present on aspartate 89. Residues 101–135 are disordered; that stretch reads SLDTSGVADRKQSRSKYGAKQPKAGAAAPVKGKRR. Positions 116–135 are enriched in low complexity; the sequence is KYGAKQPKAGAAAPVKGKRR.

This sequence belongs to the universal ribosomal protein uS12 family. Part of the 30S ribosomal subunit. Contacts proteins S8 and S17. May interact with IF1 in the 30S initiation complex.

Functionally, with S4 and S5 plays an important role in translational accuracy. Its function is as follows. Interacts with and stabilizes bases of the 16S rRNA that are involved in tRNA selection in the A site and with the mRNA backbone. Located at the interface of the 30S and 50S subunits, it traverses the body of the 30S subunit contacting proteins on the other side and probably holding the rRNA structure together. The combined cluster of proteins S8, S12 and S17 appears to hold together the shoulder and platform of the 30S subunit. The chain is Small ribosomal subunit protein uS12 from Chlorobium phaeobacteroides (strain DSM 266 / SMG 266 / 2430).